The following is a 280-amino-acid chain: Hydroxyacylglutathione hydrolase, mitochondrial (280 aa).

K61 carries the N6-acetyllysine modification. 4 residues coordinate Zn(2+): H74, H76, D78, and H79. K88 is modified (N6-acetyllysine). H130 and D154 together coordinate Zn(2+). Residues 163–165 and 193–195 contribute to the substrate site; these read KFY and HEY. H193 is a binding site for Zn(2+). K201 is modified (N6-acetyllysine; alternate). The residue at position 201 (K201) is an N6-succinyllysine; alternate. 269-272 is a substrate binding site; the sequence is RREK.

This sequence belongs to the metallo-beta-lactamase superfamily. Glyoxalase II family. As to quaternary structure, monomer. It depends on Zn(2+) as a cofactor. Testis.

The protein localises to the mitochondrion matrix. It localises to the cytoplasm. It catalyses the reaction an S-(2-hydroxyacyl)glutathione + H2O = a 2-hydroxy carboxylate + glutathione + H(+). The enzyme catalyses (R)-S-lactoylglutathione + H2O = (R)-lactate + glutathione + H(+). The protein operates within secondary metabolite metabolism; methylglyoxal degradation; (R)-lactate from methylglyoxal: step 2/2. In terms of biological role, thiolesterase that catalyzes the hydrolysis of S-D-lactoyl-glutathione to form glutathione and D-lactic acid. The sequence is that of Hydroxyacylglutathione hydrolase, mitochondrial (HAGH) from Callithrix jacchus (White-tufted-ear marmoset).